The sequence spans 103 residues: EACDDSHPCNKTLACSGNKCLIPYGSTVWDCESGFDCVIGVVCTYHGGDKVGRCTQDHRCQRGACTNPATECDEDEVCGYKEGETCYGPCRKGLTCRLGRCRP.

Post-translationally, contains 8 disulfide bonds. In terms of tissue distribution, expressed by the venom duct.

The protein resides in the secreted. In terms of biological role, acts as a neurotoxin by inhibiting an ion channel. In Lophiotoma albina (Sea snail), this protein is Turripeptide OL55-like.